The sequence spans 152 residues: Large ribosomal subunit protein uL13 (152 aa).

A disordered region spans residues 133 to 152 (EHPHQAQKPQPLTINTIPGA). Polar residues predominate over residues 139–152 (QKPQPLTINTIPGA).

The protein belongs to the universal ribosomal protein uL13 family. In terms of assembly, part of the 50S ribosomal subunit.

In terms of biological role, this protein is one of the early assembly proteins of the 50S ribosomal subunit, although it is not seen to bind rRNA by itself. It is important during the early stages of 50S assembly. In Thermosynechococcus vestitus (strain NIES-2133 / IAM M-273 / BP-1), this protein is Large ribosomal subunit protein uL13.